Here is a 553-residue protein sequence, read N- to C-terminus: Major facilitator-type transporter hxnZ (553 aa).

5 helical membrane passes run 89–109, 128–148, 152–172, 174–194, and 213–233; these read FTVA…ISAV, VAYY…SDLI, PAFN…AGTS, FIAF…NVVC, and ALSG…WVFL. N235 is a glycosylation site (N-linked (GlcNAc...) asparagine). Helical transmembrane passes span 257–277, 366–386, 409–429, 433–453, 459–481, 496–516, and 525–545; these read YTLI…IFVF, ALIW…FNFL, IQSA…NTFL, WMMG…VGVK, LAFS…YAIM, TASG…SLIA, and PIYA…GLPF.

It belongs to the major facilitator superfamily.

The protein localises to the cell membrane. Its function is as follows. Major facilitator-type transporter, part of the hnx cluster involved in the purine degradation. The nicotinate hydroxylase hnxS accepts nicotinate as a substrate and catalyzes the first step of nicotinate catabolism. The major facilitator-type transporters hxnP and hxnZ are probably involved in the uptake of nicotinate-derived metabolites, and the oxidoreductases hxnT and hxnY in the further metabolism of 6-OH nicotinic acid. This chain is Major facilitator-type transporter hxnZ, found in Emericella nidulans (strain FGSC A4 / ATCC 38163 / CBS 112.46 / NRRL 194 / M139) (Aspergillus nidulans).